A 242-amino-acid polypeptide reads, in one-letter code: Uridylate kinase (242 aa).

17–20 (KLSG) is a binding site for ATP. Gly-59 serves as a coordination point for UMP. Positions 60 and 64 each coordinate ATP. UMP contacts are provided by residues Asp-79 and 140–147 (LGNPFFTT). Thr-167, Tyr-173, and Asp-176 together coordinate ATP.

The protein belongs to the UMP kinase family. As to quaternary structure, homohexamer.

Its subcellular location is the cytoplasm. It catalyses the reaction UMP + ATP = UDP + ADP. The protein operates within pyrimidine metabolism; CTP biosynthesis via de novo pathway; UDP from UMP (UMPK route): step 1/1. With respect to regulation, inhibited by UTP. Its function is as follows. Catalyzes the reversible phosphorylation of UMP to UDP. The sequence is that of Uridylate kinase from Buchnera aphidicola subsp. Baizongia pistaciae (strain Bp).